Here is a 90-residue protein sequence, read N- to C-terminus: Probable Fe(2+)-trafficking protein (90 aa).

It belongs to the Fe(2+)-trafficking protein family.

Its function is as follows. Could be a mediator in iron transactions between iron acquisition and iron-requiring processes, such as synthesis and/or repair of Fe-S clusters in biosynthetic enzymes. In Cupriavidus pinatubonensis (strain JMP 134 / LMG 1197) (Cupriavidus necator (strain JMP 134)), this protein is Probable Fe(2+)-trafficking protein.